The sequence spans 211 residues: Uridine kinase (211 aa).

12–19 (GGSGGGKT) contacts ATP.

This sequence belongs to the uridine kinase family.

It localises to the cytoplasm. It carries out the reaction uridine + ATP = UMP + ADP + H(+). It catalyses the reaction cytidine + ATP = CMP + ADP + H(+). It functions in the pathway pyrimidine metabolism; CTP biosynthesis via salvage pathway; CTP from cytidine: step 1/3. Its pathway is pyrimidine metabolism; UMP biosynthesis via salvage pathway; UMP from uridine: step 1/1. The sequence is that of Uridine kinase from Streptococcus thermophilus (strain CNRZ 1066).